Reading from the N-terminus, the 170-residue chain is CASP-like protein 2D1 (170 aa).

The Cytoplasmic segment spans residues 1-4 (MLKL). The helical transmembrane segment at 5 to 25 (LDFSLRLSVIPLSVATIWLTV) threads the bilayer. The Extracellular portion of the chain corresponds to 26-47 (TNKQDNSIYGYLKYSDLTGLKY). A helical transmembrane segment spans residues 48–68 (MVFISGICASYAFIAAVSTWI). Residues 69–83 (RCIVTKTWLFFVSDQ) are Cytoplasmic-facing. A helical transmembrane segment spans residues 84–104 (IVAYLMVTSGTAVLEILYLAY). Topologically, residues 105–127 (NGDREVSWSEACTSYGKFCYRMK) are extracellular. Residues 128–148 (LAVILHALALSCFIILAVISA) traverse the membrane as a helical segment. At 149-170 (YRAFSIFEPPLVPSKVVEEDRA) the chain is on the cytoplasmic side.

Belongs to the Casparian strip membrane proteins (CASP) family. In terms of assembly, homodimer and heterodimers.

It is found in the cell membrane. This is CASP-like protein 2D1 from Populus trichocarpa (Western balsam poplar).